We begin with the raw amino-acid sequence, 359 residues long: NAC domain-containing protein 45 (359 aa).

The NAC domain occupies 19-185; that stretch reads LPPGFRFHPT…EWVVCKVFHK (167 aa). Residues 130–191 mediate DNA binding; that stretch reads VGMKKTLVFY…VFHKKGDDRE (62 aa).

In terms of tissue distribution, expressed in roots. Expressed at low levels in leaves, stems and panicles.

The protein localises to the nucleus. Its function is as follows. Transcription activator involved in responses to drought stress and salt stress. Transactivates the stress response genes LEA19 and PM19L. This is NAC domain-containing protein 45 from Oryza sativa subsp. japonica (Rice).